A 619-amino-acid chain; its full sequence is ATP-dependent zinc metalloprotease FtsH (619 aa).

The Cytoplasmic segment spans residues 1–11 (MSNTDPQPPQK). The chain crosses the membrane as a helical span at residues 12-32 (LPLNWVVWTLAVALMLYYLPA). The Periplasmic segment spans residues 33-120 (MRDRPEPAIK…EVKEGHDASS (88 aa)). The helical transmembrane segment at 121 to 141 (SKVILLSYLPWIMFMIILFWL) threads the bilayer. The Cytoplasmic segment spans residues 142 to 619 (SRRTFRNFSG…IDECLQTGAS (478 aa)). Residue 216–223 (GPPGTGKT) participates in ATP binding. His437 contributes to the Zn(2+) binding site. The active site involves Glu438. Residues His441 and Asp513 each contribute to the Zn(2+) site.

It in the central section; belongs to the AAA ATPase family. The protein in the C-terminal section; belongs to the peptidase M41 family. In terms of assembly, homohexamer. Requires Zn(2+) as cofactor.

The protein resides in the cell inner membrane. In terms of biological role, acts as a processive, ATP-dependent zinc metallopeptidase for both cytoplasmic and membrane proteins. Plays a role in the quality control of integral membrane proteins. The sequence is that of ATP-dependent zinc metalloprotease FtsH from Hahella chejuensis (strain KCTC 2396).